The chain runs to 513 residues: Serine/threonine-protein kinase PBL27 (513 aa).

A disordered region spans residues 1 to 61; it reads MSGCLPCFGS…KKELTAPKEG (61 aa). 2 S-palmitoyl cysteine lipidation sites follow: C4 and C7. Basic and acidic residues-rich tracts occupy residues 15-27 and 38-57; these read AASK…ELSA and ISLD…ELTA. Residues 83 to 360 enclose the Protein kinase domain; the sequence is FRPECLLGEG…GDVVTALTYL (278 aa). ATP contacts are provided by residues 89-97 and K112; that span reads LGEGGFGRV. D210 (proton acceptor) is an active-site residue. S244 is subject to Phosphoserine; by CERK1. T245 and T250 each carry phosphothreonine; by CERK1. Positions 365 to 378 are enriched in polar residues; the sequence is FDPNAPSGQNSRSG. The tract at residues 365–513 is disordered; sequence FDPNAPSGQN…GPGSFDSTND (149 aa). Phosphoserine occurs at positions 392 and 401. Over residues 417–428 the composition is skewed to basic and acidic residues; that stretch reads NSPDYRRRDMVR. Over residues 434-446 the composition is skewed to gly residues; the sequence is SEGGSETGGGSGR. Residues 456 to 473 are compositionally biased toward polar residues; sequence QESQRGSPASVGRSSRGT. The segment covering 475–486 has biased composition (basic and acidic residues); sequence RNRDLDRERAVA. Over residues 504–513 the composition is skewed to polar residues; that stretch reads GPGSFDSTND.

It belongs to the protein kinase superfamily. Ser/Thr protein kinase family. As to quaternary structure, interacts with CERK1 (preferentially unphosphorylated) at the plasma membrane. Binds to MAPKKK5 at the plasma membrane; disassociation is induced by chitin perception by the CERK1 complex. Also associates with MAPKKK3. Post-translationally, phosphorylated by CERK1 upon elicitation by chitin. In terms of processing, palmitoylation at Cys-4 and Cys-7 are required for plasma membrane location.

The protein resides in the cell membrane. It catalyses the reaction L-seryl-[protein] + ATP = O-phospho-L-seryl-[protein] + ADP + H(+). The enzyme catalyses L-threonyl-[protein] + ATP = O-phospho-L-threonyl-[protein] + ADP + H(+). In terms of biological role, receptor-like cytoplasmic kinase involved in the transduction of signal between the host cell surface chitin receptor complex CERK1-LYK5 and the intracellular MAPKKK5-dependent mitogen-activated protein kinase (MAPK) cascade that leads to chitin-induced immunity. Phosphorylates and activates MAPKKK5 when phosphorylated by CERK1 after elicitation by chitin. The polypeptide is Serine/threonine-protein kinase PBL27 (Arabidopsis thaliana (Mouse-ear cress)).